Consider the following 989-residue polypeptide: Mediator of RNA polymerase II transcription subunit 24 (989 aa).

6 consecutive short sequence motifs (LXXLL motif) follow at residues 128 to 132, 344 to 348, 448 to 452, 557 to 561, 788 to 792, and 857 to 861; these read LHWLL, LTPLL, LDLLL, LVALL, LPGLL, and LMRLL. 2 positions are modified to phosphoserine: S862 and S873.

Belongs to the Mediator complex subunit 24 family. As to quaternary structure, component of the Mediator complex, which is composed of MED1, MED4, MED6, MED7, MED8, MED9, MED10, MED11, MED12, MED13, MED13L, MED14, MED15, MED16, MED17, MED18, MED19, MED20, MED21, MED22, MED23, MED24, MED25, MED26, MED27, MED29, MED30, MED31, CCNC, CDK8 and CDC2L6/CDK11. The MED12, MED13, CCNC and CDK8 subunits form a distinct module termed the CDK8 module. Mediator containing the CDK8 module is less active than Mediator lacking this module in supporting transcriptional activation. Individual preparations of the Mediator complex lacking one or more distinct subunits have been variously termed ARC, CRSP, DRIP, PC2, SMCC and TRAP. Interacts with AR. As to expression, ubiquitous. Abundant in skeletal muscle, heart and placenta.

It is found in the nucleus. Functionally, component of the Mediator complex, a coactivator involved in the regulated transcription of nearly all RNA polymerase II-dependent genes. Mediator functions as a bridge to convey information from gene-specific regulatory proteins to the basal RNA polymerase II transcription machinery. Mediator is recruited to promoters by direct interactions with regulatory proteins and serves as a scaffold for the assembly of a functional preinitiation complex with RNA polymerase II and the general transcription factors. The sequence is that of Mediator of RNA polymerase II transcription subunit 24 (MED24) from Homo sapiens (Human).